Reading from the N-terminus, the 88-residue chain is Small ribosomal subunit protein uS19 (88 aa).

This sequence belongs to the universal ribosomal protein uS19 family.

Functionally, protein S19 forms a complex with S13 that binds strongly to the 16S ribosomal RNA. This Chlamydia caviae (strain ATCC VR-813 / DSM 19441 / 03DC25 / GPIC) (Chlamydophila caviae) protein is Small ribosomal subunit protein uS19.